The following is a 162-amino-acid chain: Sec-independent protein translocase protein TatB (162 aa).

Residues 1–21 (MFDLGWTELLVIGVVALIVVG) form a helical membrane-spanning segment. Disordered regions lie at residues 69 to 111 (ATNP…DRAE) and 124 to 162 (AADR…ETKA). Composition is skewed to basic and acidic residues over residues 83 to 111 (ATRD…DRAE) and 124 to 141 (AADR…KAEE). Over residues 144–155 (AALSATPASTAS) the composition is skewed to low complexity.

Belongs to the TatB family. The Tat system comprises two distinct complexes: a TatABC complex, containing multiple copies of TatA, TatB and TatC subunits, and a separate TatA complex, containing only TatA subunits. Substrates initially bind to the TatABC complex, which probably triggers association of the separate TatA complex to form the active translocon.

It is found in the cell inner membrane. Functionally, part of the twin-arginine translocation (Tat) system that transports large folded proteins containing a characteristic twin-arginine motif in their signal peptide across membranes. Together with TatC, TatB is part of a receptor directly interacting with Tat signal peptides. TatB may form an oligomeric binding site that transiently accommodates folded Tat precursor proteins before their translocation. The sequence is that of Sec-independent protein translocase protein TatB from Ruegeria sp. (strain TM1040) (Silicibacter sp.).